A 377-amino-acid polypeptide reads, in one-letter code: Cyclin-I (377 aa).

The segment at 357–377 is disordered; the sequence is DLSRQEGHASPCPPLQPVSVM. Residues 367-377 are compositionally biased toward pro residues; sequence PCPPLQPVSVM.

The protein belongs to the cyclin family. Highest levels in adult heart, brain and skeletal muscle. Lower levels in adult placenta, lung, kidney and pancreas. Also high levels in fetal brain and lower levels in fetal lung, liver and kidney. Also abundant in testis and thyroid.

It is found in the nucleus membrane. This chain is Cyclin-I, found in Homo sapiens (Human).